The chain runs to 430 residues: Dihydroorotase (430 aa).

The Zn(2+) site is built by His60 and His62. Residues 62–64 and Asn94 each bind substrate; that span reads HLR. Asp152, His179, His232, and Asp305 together coordinate Zn(2+). Asp305 is a catalytic residue. Substrate contacts are provided by residues His309 and 323-324; that span reads FG.

The protein belongs to the metallo-dependent hydrolases superfamily. DHOase family. Class I DHOase subfamily. Zn(2+) serves as cofactor.

It carries out the reaction (S)-dihydroorotate + H2O = N-carbamoyl-L-aspartate + H(+). It participates in pyrimidine metabolism; UMP biosynthesis via de novo pathway; (S)-dihydroorotate from bicarbonate: step 3/3. Functionally, catalyzes the reversible cyclization of carbamoyl aspartate to dihydroorotate. This Solibacter usitatus (strain Ellin6076) protein is Dihydroorotase.